A 591-amino-acid chain; its full sequence is Beta-fructofuranosidase, insoluble isoenzyme CWINV4 (591 aa).

The N-terminal stretch at 1 to 22 is a signal peptide; sequence MAISNVISVLLLLLVLINLSNQ. Residues 61–64, Q80, W88, and 123–124 contribute to the substrate site; these read WIND and WS. D64 is a catalytic residue. Residues N145 and N182 are each glycosylated (N-linked (GlcNAc...) asparagine). Substrate is bound by residues 187 to 188, E242, and D276; that span reads RD. Residues N336, N472, and N565 are each glycosylated (N-linked (GlcNAc...) asparagine). C436 and C484 form a disulfide bridge.

This sequence belongs to the glycosyl hydrolase 32 family. As to expression, expressed in flowers, and seeds, and, to a lower extent, in seedlings.

The protein resides in the secreted. It localises to the extracellular space. The protein localises to the apoplast. It is found in the cell wall. The enzyme catalyses Hydrolysis of terminal non-reducing beta-D-fructofuranoside residues in beta-D-fructofuranosides.. The protein is Beta-fructofuranosidase, insoluble isoenzyme CWINV4 (CWINV4) of Arabidopsis thaliana (Mouse-ear cress).